We begin with the raw amino-acid sequence, 567 residues long: Maltase A2 (567 aa).

A signal peptide spans 1–23; the sequence is MPKWAHLGLAALLLISTTQEGTA. Residues asparagine 30, asparagine 124, and asparagine 198 are each glycosylated (N-linked (GlcNAc...) asparagine). Aspartate 226 acts as the Nucleophile in catalysis. Glutamate 298 (proton donor) is an active-site residue. The N-linked (GlcNAc...) asparagine glycan is linked to asparagine 312.

It belongs to the glycosyl hydrolase 13 family.

The enzyme catalyses Hydrolysis of terminal, non-reducing (1-&gt;4)-linked alpha-D-glucose residues with release of alpha-D-glucose.. The polypeptide is Maltase A2 (Mal-A2) (Drosophila melanogaster (Fruit fly)).